A 204-amino-acid polypeptide reads, in one-letter code: LexA repressor (204 aa).

The segment at residues 29 to 49 (VREIGDAVGLMSSSTVHGHLQ) is a DNA-binding region (H-T-H motif). Catalysis depends on for autocatalytic cleavage activity residues serine 127 and lysine 164.

This sequence belongs to the peptidase S24 family. In terms of assembly, homodimer.

It catalyses the reaction Hydrolysis of Ala-|-Gly bond in repressor LexA.. Represses a number of genes involved in the response to DNA damage (SOS response), including recA and lexA. In the presence of single-stranded DNA, RecA interacts with LexA causing an autocatalytic cleavage which disrupts the DNA-binding part of LexA, leading to derepression of the SOS regulon and eventually DNA repair. The chain is LexA repressor from Desulfitobacterium hafniense (strain DSM 10664 / DCB-2).